Here is a 435-residue protein sequence, read N- to C-terminus: Dual specificity protein kinase FUZ7 (435 aa).

Residues 1–61 are disordered; that stretch reads MLSSGAGSSI…TIGKSSAVTP (61 aa). A compositionally biased stretch (polar residues) spans 46 to 59; the sequence is AASNASTIGKSSAV. The region spanning 109–417 is the Protein kinase domain; that stretch reads LKTLSELGAG…PKDLTKHQYV (309 aa). ATP-binding positions include 115-123 and Lys138; that span reads LGAGNGGTV. Asp231 serves as the catalytic Proton acceptor. The disordered stretch occupies residues 307–359; it reads NEEDDDSDADNNYTNEDLAGTLSPTKPAPMISLGQNEKQRRRKSKPAGVSLEG.

Belongs to the protein kinase superfamily. STE Ser/Thr protein kinase family. MAP kinase kinase subfamily.

It carries out the reaction L-seryl-[protein] + ATP = O-phospho-L-seryl-[protein] + ADP + H(+). It catalyses the reaction L-threonyl-[protein] + ATP = O-phospho-L-threonyl-[protein] + ADP + H(+). The catalysed reaction is L-tyrosyl-[protein] + ATP = O-phospho-L-tyrosyl-[protein] + ADP + H(+). In terms of biological role, protein kinase that is necessary for a-locus-dependent processes, such as conjugation tube formation, filament formation, and maintenance of filamentous growth, and for a-locus-independent processes, such as tumor induction and teliospore germination. In Mycosarcoma maydis (Corn smut fungus), this protein is Dual specificity protein kinase FUZ7 (FUZ7).